The chain runs to 325 residues: Eukaryotic translation initiation factor 3 subunit I (325 aa).

5 WD repeats span residues 8 to 47 (GHER…RLGT), 50 to 89 (GHTG…QLAL), 144 to 183 (CSES…VLKK), 186 to 225 (EHTK…HVKT), and 283 to 324 (GHFG…FELE).

Belongs to the eIF-3 subunit I family. As to quaternary structure, component of the eukaryotic translation initiation factor 3 (eIF-3) complex, which is composed of 13 subunits: eif3a, eif3b, eif3c, eif3d, eif3e, eif3f, eif3g, eif3h, eif3i, eif3j, eif3k, eif3l and eif3m.

Its subcellular location is the cytoplasm. Functionally, component of the eukaryotic translation initiation factor 3 (eIF-3) complex, which is involved in protein synthesis of a specialized repertoire of mRNAs and, together with other initiation factors, stimulates binding of mRNA and methionyl-tRNAi to the 40S ribosome. The eIF-3 complex specifically targets and initiates translation of a subset of mRNAs involved in cell proliferation. The chain is Eukaryotic translation initiation factor 3 subunit I (eif3i) from Danio rerio (Zebrafish).